The following is a 240-amino-acid chain: Ribosome maturation protein SDO1 homolog (240 aa).

This sequence belongs to the SDO1/SBDS family.

The protein is Ribosome maturation protein SDO1 homolog of Methanocaldococcus jannaschii (strain ATCC 43067 / DSM 2661 / JAL-1 / JCM 10045 / NBRC 100440) (Methanococcus jannaschii).